Consider the following 257-residue polypeptide: uncharacterized protein (257 aa).

This sequence to yeast YKR015c.

This is an uncharacterized protein from Saccharomyces cerevisiae (strain ATCC 204508 / S288c) (Baker's yeast).